The primary structure comprises 221 residues: Serine/arginine-rich splicing factor 2 (221 aa).

Ser2 is modified (N-acetylserine). Ser2 is subject to Phosphoserine. The RRM domain occupies 14 to 92 (TSLKVDNLTY…RELRVQMARY (79 aa)). Thr22 and Thr25 each carry phosphothreonine. Ser26 is subject to Phosphoserine. Lys52 carries the N6-acetyllysine modification. The tract at residues 92 to 221 (YGRPPDSHHS…SPEEEGAVSS (130 aa)) is disordered. 2 stretches are compositionally biased toward basic residues: residues 117–171 (RRSR…RSKS) and 179–189 (SRSRSRSRSRS). Residues Ser189, Ser191, Ser204, Ser206, Ser208, Ser212, and Ser220 each carry the phosphoserine modification.

This sequence belongs to the splicing factor SR family. Interacts with CCNL1 and CCNL2. Interacts with SCAF11. Interacts with ZRSR2/U2AF1-RS2. Interacts with CCDC55 (via C-terminus). In vitro, self-associates and binds SRSF1/SFRS1 (ASF/SF2), SNRNP70 and U2AF1 but not U2AF2. Binds SREK1/SFRS12. Interacts with BRDT. Extensively phosphorylated on serine residues in the RS domain. Phosphorylated by SRPK2 and this causes its redistribution from the nuclear speckle to nucleoplasm and controls cell fate decision in response to cisplatin treatment. KAT5/TIP60 inhibits its phosphorylation by preventing SRPK2 nuclear translocation. Post-translationally, acetylation on Lys-52 by KAT5/TIP60 promotes its proteasomal degradation. This effect is counterbalanced by HDAC6, which positively controls SRSF2 protein level by deacetylating it and preventing its proteasomal degradation. As to expression, expressed in all the tissues examined; liver, kidney, spleen, heart, lung and brain.

The protein localises to the nucleus. Its subcellular location is the nucleoplasm. It localises to the nucleus speckle. Functionally, necessary for the splicing of pre-mRNA. It is required for formation of the earliest ATP-dependent splicing complex and interacts with spliceosomal components bound to both the 5'- and 3'-splice sites during spliceosome assembly. It also is required for ATP-dependent interactions of both U1 and U2 snRNPs with pre-mRNA. Can bind to the myelin basic protein (MBP) gene MB3 regulatory region and increase transcription of the mbp promoter in cells derived from the CNS. The phosphorylated form (by SRPK2) is required for cellular apoptosis in response to cisplatin treatment. The sequence is that of Serine/arginine-rich splicing factor 2 (Srsf2) from Mus musculus (Mouse).